Here is a 231-residue protein sequence, read N- to C-terminus: MAKLTKKQKALQGKVDSTKLYAFAEAVALVKEAATAKFDESIDVAVQLGVDAKKSDQVVRGAVVLPNGTGKTTRVAVFAQGAKAEEAKAAGADIVGMDDLAAQVKAGDMPFDVVIAAPDAMRVVGTLGQILGPRGLMPNPKVGTVTPDVATAVKNAKAGQVQFRVDKAGIVHSTIGRRSFDNDKLQGNLAALIEALNKAKPATSKGVYLRKVAVSSTMGVGVRVDTQTIAA.

The protein belongs to the universal ribosomal protein uL1 family. As to quaternary structure, part of the 50S ribosomal subunit.

Functionally, binds directly to 23S rRNA. The L1 stalk is quite mobile in the ribosome, and is involved in E site tRNA release. In terms of biological role, protein L1 is also a translational repressor protein, it controls the translation of the L11 operon by binding to its mRNA. This is Large ribosomal subunit protein uL1 from Acidovorax ebreus (strain TPSY) (Diaphorobacter sp. (strain TPSY)).